A 531-amino-acid chain; its full sequence is Protein RPN4 (531 aa).

The disordered stretch occupies residues 338-432 (RFPSPSTSAN…PSAHTSSSDG (95 aa)). The segment covering 341 to 354 (SPSTSANVPSTATT) has biased composition (polar residues). A compositionally biased stretch (low complexity) spans 362–375 (SSSNRSCVSNSNEN). Residues 382 to 398 (KKPTSAVVSSNASRRKL) carry the Nuclear localization signal motif. Basic residues predominate over residues 394–407 (SRRKLINYTKKHLS). Positions 408–430 (SHSSTNSNSKPSTASPSAHTSSS) are enriched in low complexity.

As to quaternary structure, probably interacts with SEC63. Interacts with MUB1, UBR2 and RPN2. Ubiquitinated by UBR2 in the presence of UBC2; which leads to proteasomal degradation.

It is found in the nucleus. Its function is as follows. Acts as a transcriptional activator of a number of genes encoding proteasomal subunits. Binds to a PACE (proteasome-associated control element) DNA sequence 5'-GGTGGCAAA-3'. Its expression is in turn regulated by the 26S proteasome, thereby providing a negative feedback control mechanism. Required for normal growth at low temperatures. This is Protein RPN4 (RPN4) from Saccharomyces cerevisiae (strain ATCC 204508 / S288c) (Baker's yeast).